Here is an 813-residue protein sequence, read N- to C-terminus: G-type lectin S-receptor-like serine/threonine-protein kinase LECRK1 (813 aa).

Positions 1-19 are cleaved as a signal peptide; it reads MVALLLFPMLLQLLSPTCA. The Extracellular segment spans residues 20 to 466; the sequence is QTQKNITLGS…NRKHWVLGSS (447 aa). Positions 22–149 constitute a Bulb-type lectin domain; sequence QKNITLGSTL…DGTTKWQTFD (128 aa). Residues Asn-24, Asn-57, Asn-164, Asn-168, Asn-219, and Asn-242 are each glycosylated (N-linked (GlcNAc...) asparagine). The EGF-like; atypical domain occupies 293–346; it reads PQNICHAIVSDVGSGVCGFNSYCTFDGTRNQIASCQCPPWYKFFDEQKKYKGCK. 5 disulfides stabilise this stretch: Cys-297–Cys-315, Cys-309–Cys-327, Cys-329–Cys-345, Cys-391–Cys-413, and Cys-395–Cys-401. The PAN domain maps to 354 to 433; it reads CDLDEATALA…NMADYVQRTV (80 aa). N-linked (GlcNAc...) asparagine glycans are attached at residues Asn-407 and Asn-441. Residues 467-487 form a helical membrane-spanning segment; it reads LILGTSILVNFALISIFLFGT. Topologically, residues 488–813 are cytoplasmic; that stretch reads YCRIATKKNI…DPCSFISSLP (326 aa). The region spanning 523–797 is the Protein kinase domain; that stretch reads AGFHEILGAG…KVTQMLDGAV (275 aa). Residues 529 to 537 and Lys-553 contribute to the ATP site; that span reads LGAGASGVV. Asp-647 functions as the Proton acceptor in the catalytic mechanism.

It belongs to the protein kinase superfamily. Ser/Thr protein kinase family.

The protein resides in the membrane. It catalyses the reaction L-seryl-[protein] + ATP = O-phospho-L-seryl-[protein] + ADP + H(+). The enzyme catalyses L-threonyl-[protein] + ATP = O-phospho-L-threonyl-[protein] + ADP + H(+). Involved in innate immunity. Required for the expression of defense-related genes PR1A, LOX2 and CHS1 upon biotic stresses. Required for basal resistance to the fungal blast (M.grisea), bacterial blight (X.oryzae pv. oryzae, Xoo) and the herbivorous insect brown planthopper (N.lugens, BPH). May be involved in several defense signaling pathways. Involved in the promotion of seed germination. Required for the expression of alpha-amylase genes during seed germination. Involved in resistance against the herbivorous insect brown planthopper (N.lugens, BPH). Member of the BPH3 (BPH resistance locus 3) cluster which contains LECRK1, LECRK2 and LECRK3. The sequence is that of G-type lectin S-receptor-like serine/threonine-protein kinase LECRK1 from Oryza sativa subsp. japonica (Rice).